The sequence spans 397 residues: Acetate kinase (397 aa).

Asn-8 provides a ligand contact to Mg(2+). An ATP-binding site is contributed by Lys-15. Residue Arg-90 participates in substrate binding. Catalysis depends on Asp-147, which acts as the Proton donor/acceptor. Residue 207 to 211 (HLGAG) participates in ATP binding. Residue Glu-382 coordinates Mg(2+).

Belongs to the acetokinase family. Homodimer. Mg(2+) is required as a cofactor. It depends on Mn(2+) as a cofactor.

It localises to the cytoplasm. It catalyses the reaction acetate + ATP = acetyl phosphate + ADP. The protein operates within metabolic intermediate biosynthesis; acetyl-CoA biosynthesis; acetyl-CoA from acetate: step 1/2. Catalyzes the formation of acetyl phosphate from acetate and ATP. Can also catalyze the reverse reaction. The polypeptide is Acetate kinase (Lactiplantibacillus plantarum (strain ATCC BAA-793 / NCIMB 8826 / WCFS1) (Lactobacillus plantarum)).